The sequence spans 838 residues: MAGILTKIFGDGNQKQLKRLEKQVDLIEQLEPEMEKLEDIDFKNKTEEFKTRYKNGESLNDLLIEVYALVREASKRVLGMRPFRTQLLGAIALHEGNISEMKTGEGKTLASTMPAYLNALTDEGVHIITVNDYLAERDAKDNGLLFDFLGITVGFNHNGLSKDEKREAYLADITYGTNNEFGFDYLRDNMVLYKEQMVQRPLNFAIIDEVDSILIDEARTPLIISGSAKKSAALYQQADGFVRTLNKENDYTYDEKTKGVQLTEEGINKAENYFSIENLFDLDHVSLTHHINQALKAHVSMHRDTDYMVEEDEVVIIDQFTGRKMKGRRYSDGLHQAIEAKEGLQIQNESMTLASITFQNYFRMYNKLSGMTGTAKTEEEEFRNIYNMDVIAIPTNLPIAREDRADLIYKSMEGKFRAVVENIKERYENGQPVLVGTVAVETSELISKLLKRAGVKHEVLNAKNHFREADIIEHAGQRGSVTIATNMAGRGTDIKLGDGVKELGGLAVIGTERHESRRIDNQLRGRSGRQGDPGISQFFLSMEDELMRRFGSDNLKSMMERLGMDDSQPIESKMVSRAVESAQKRVEGNNFDARKTILSYDDVLREQREIIYKQRFEVIDDNSDLREIIENMIQSSIERVVATHTQDSDEENWNLEAIIEYSNGNLFDPDTIHTDDLKDKEANEITELLMKKVKEKYDAKEQELTPEQFREFEKVILLRTVDSKWMDHIDQMDQLRQGIHLRAYGQNDPLREYQMEGFSMFEEMVANIEDEVAKYIMKAQIRENLQRQEVVKNTQAVSGGEDSGKKKTKKPVVKSNTVKRNDPCPCGSGKKYKNCHGQ.

Residues glutamine 86, 104–108 (GEGKT), and aspartate 493 each bind ATP. Positions 793–838 (NTQAVSGGEDSGKKKTKKPVVKSNTVKRNDPCPCGSGKKYKNCHGQ) are disordered. Zn(2+) is bound by residues cysteine 824, cysteine 826, cysteine 835, and histidine 836.

It belongs to the SecA family. Monomer and homodimer. Part of the essential Sec protein translocation apparatus which comprises SecA, SecYEG and auxiliary proteins SecDF. Other proteins may also be involved. Requires Zn(2+) as cofactor.

The protein resides in the cell membrane. It localises to the cytoplasm. It catalyses the reaction ATP + H2O + cellular proteinSide 1 = ADP + phosphate + cellular proteinSide 2.. Its function is as follows. Part of the Sec protein translocase complex. Interacts with the SecYEG preprotein conducting channel. Has a central role in coupling the hydrolysis of ATP to the transfer of proteins into and across the cell membrane, serving as an ATP-driven molecular motor driving the stepwise translocation of polypeptide chains across the membrane. In Oceanobacillus iheyensis (strain DSM 14371 / CIP 107618 / JCM 11309 / KCTC 3954 / HTE831), this protein is Protein translocase subunit SecA.